Consider the following 860-residue polypeptide: Leucine--tRNA ligase (860 aa).

The 'HIGH' region signature appears at 42-52 (PYPSGRLHMGH). The short motif at 619–623 (KMSKS) is the 'KMSKS' region element. Lysine 622 is a binding site for ATP.

The protein belongs to the class-I aminoacyl-tRNA synthetase family.

The protein localises to the cytoplasm. It carries out the reaction tRNA(Leu) + L-leucine + ATP = L-leucyl-tRNA(Leu) + AMP + diphosphate. The protein is Leucine--tRNA ligase of Yersinia enterocolitica serotype O:8 / biotype 1B (strain NCTC 13174 / 8081).